Consider the following 103-residue polypeptide: Small ribosomal subunit protein uS10 (103 aa).

This sequence belongs to the universal ribosomal protein uS10 family. In terms of assembly, part of the 30S ribosomal subunit.

Functionally, involved in the binding of tRNA to the ribosomes. The polypeptide is Small ribosomal subunit protein uS10 (Chromohalobacter salexigens (strain ATCC BAA-138 / DSM 3043 / CIP 106854 / NCIMB 13768 / 1H11)).